The primary structure comprises 202 residues: Imidazoleglycerol-phosphate dehydratase (202 aa).

The protein belongs to the imidazoleglycerol-phosphate dehydratase family.

The protein localises to the cytoplasm. The catalysed reaction is D-erythro-1-(imidazol-4-yl)glycerol 3-phosphate = 3-(imidazol-4-yl)-2-oxopropyl phosphate + H2O. It functions in the pathway amino-acid biosynthesis; L-histidine biosynthesis; L-histidine from 5-phospho-alpha-D-ribose 1-diphosphate: step 6/9. The protein is Imidazoleglycerol-phosphate dehydratase of Acinetobacter baumannii (strain SDF).